Reading from the N-terminus, the 356-residue chain is Cyclin-D2-2 (356 aa).

Residues 325-343 are compositionally biased toward polar residues; the sequence is LGSSQSNSNNKDYNSQDSA. Residues 325–356 are disordered; that stretch reads LGSSQSNSNNKDYNSQDSAPASKRRRLNTTPI. Residues 346-356 are compositionally biased toward basic residues; that stretch reads SKRRRLNTTPI.

The protein belongs to the cyclin family. Cyclin D subfamily.

The sequence is that of Cyclin-D2-2 (CYCD2-2) from Oryza sativa subsp. japonica (Rice).